The chain runs to 172 residues: Disulfide bond formation protein B (172 aa).

Residues 1–13 (MNWLAQLPTQRTP) lie on the Cytoplasmic side of the membrane. The chain crosses the membrane as a helical span at residues 14–30 (WLLFSGIVFLLEITALF). At 31–48 (FQYKMGLAPCIMCIYQRT) the chain is on the periplasmic side. Cysteines 40 and 43 form a disulfide. The helical transmembrane segment at 49–64 (AVLGLLIAGIIGTSNP) threads the bilayer. Residues 65-71 (EHRGVRL) lie on the Cytoplasmic side of the membrane. Residues 72 to 89 (LAYSVWAVSSVWGFIIAR) traverse the membrane as a helical segment. The Periplasmic portion of the chain corresponds to 90–145 (EHIEMQTTTDPFAFSCEFEPNFPAFMPLHEWIPSFFAATGDCGNIDWQFAGLSMPA). An intrachain disulfide couples Cys105 to Cys131. Residues 146-164 (WMEVIFALFAATLFLLVTS) form a helical membrane-spanning segment. Over 165-172 (RLMTKRSL) the chain is Cytoplasmic.

This sequence belongs to the DsbB family.

It localises to the cell inner membrane. Required for disulfide bond formation in some periplasmic proteins. Acts by oxidizing the DsbA protein. This Pseudoalteromonas translucida (strain TAC 125) protein is Disulfide bond formation protein B.